A 29-amino-acid chain; its full sequence is Galanin (29 aa).

The residue at position 29 (alanine 29) is an Alanine amide.

It belongs to the galanin family.

The protein resides in the secreted. Functionally, contracts smooth muscle of the gastrointestinal and genitourinary tract, regulates growth hormone release, modulates insulin release, and may be involved in the control of adrenal secretion. The polypeptide is Galanin (GAL) (Ovis aries (Sheep)).